The chain runs to 378 residues: Protein SLG1 (378 aa).

The first 21 residues, 1–21, serve as a signal peptide directing secretion; sequence MRPNKTSLLLALLSILSQANA. One can recognise a WSC domain in the interval 22-110; that stretch reads YEYVNCFSSL…EDAYSVYQLD (89 aa). At 22–264 the chain is on the extracellular side; it reads YEYVNCFSSL…THKKKANVGA (243 aa). Residue Asn-65 is glycosylated (N-linked (GlcNAc...) asparagine). 2 disordered regions span residues 115-201 and 236-256; these read SNSI…TSST and QNSG…SKTH. Residues 236–253 are compositionally biased toward low complexity; sequence QNSGSATGTAGSDSTSGS. A helical transmembrane segment spans residues 265-285; the sequence is IVGGVVGGVVGAVAIALCILL. At 286–378 the chain is on the cytoplasmic side; the sequence is IVRHINMKRE…LTVVNPDEAD (93 aa). The disordered stretch occupies residues 318–378; sequence ASSFSSNHGP…LTVVNPDEAD (61 aa). The span at 319-331 shows a compositional bias: low complexity; it reads SSFSSNHGPSSGS. Ser-331 and Ser-353 each carry phosphoserine.

Glycosylated. Phosphorylated. Phosphorylation serves a negative regulatory role.

Its subcellular location is the cell membrane. In terms of biological role, plays a role during G1 to regulate entering or exiting the cell cycle. Involved in stress responses. Has a role in cell wall integrity signaling. Activates ROM1 or ROM2 catalyzed guanine nucleotide exchange toward RHO1. Important regulator of the actin cytoskeleton rearrangements in conditions of cell wall expansion and membrane stretching. Specifically required for the actin reorganization induced by hypo-osmotic shock. Multicopy suppressor of 1,3-beta-glucan synthase (GS). Activates GS upstream of RHO1. Acts positively on the PKC1-MAPK pathway. Activates transiently SLT2 during alkaline stress, which leads to an increase in the expression of several specific genes. This chain is Protein SLG1 (SLG1), found in Saccharomyces cerevisiae (strain ATCC 204508 / S288c) (Baker's yeast).